Here is a 115-residue protein sequence, read N- to C-terminus: Transmembrane protein 14C (115 aa).

A run of 4 helical transmembrane segments spans residues 8 to 28 (LVPL…GGII), 33 to 53 (AGSV…GLGA), 63 to 83 (VWVF…RFYN), and 88 to 108 (MPAG…VAKI).

Belongs to the TMEM14 family.

It is found in the mitochondrion membrane. Required for normal heme biosynthesis. The protein is Transmembrane protein 14C (Tmem14c) of Rattus norvegicus (Rat).